A 661-amino-acid polypeptide reads, in one-letter code: Altered inheritance of mitochondria protein 3-1 (661 aa).

Disordered regions lie at residues 19–99, 116–142, 154–194, 263–419, 431–473, 487–563, and 615–661; these read TKTV…YSGY, AQNTPYSSPAQQQPVSPQPPVQNSQYN, QPAG…TFQS, LPQQ…DSSS, RNIP…SPGI, YAGH…RKDN, and EAAT…FVHS. The span at 37–58 shows a compositional bias: basic and acidic residues; the sequence is KDKDTHHTDHHEEDEYSEDYHT. The segment covering 120-142 has biased composition (low complexity); the sequence is PYSSPAQQQPVSPQPPVQNSQYN. Positions 263-318 are enriched in low complexity; that stretch reads LPQQQQQQQQQPEYNTQLQQNQQLHNQQAYGQQQQIYSNNTQPQYVSQTQQTSYTQ. Polar residues-rich tracts occupy residues 319 to 328 and 356 to 371; these read NAPPQQTRSP and VNQTAITSTNSANEAL. The segment covering 390 to 399 has biased composition (basic and acidic residues); it reads THRDRGRASV. Residues 406–419 are compositionally biased toward polar residues; the sequence is ENMQTNNSTIDSSS. A compositionally biased stretch (low complexity) spans 434–447; that stretch reads PAPAVGPPGAATRA. Composition is skewed to polar residues over residues 458 to 473, 512 to 533, and 541 to 552; these read SQSMSTNSVVETSPGI, RSTSTKMNTQPNPQTPISPSRD, and RSTVSSIQSSNR.

It belongs to the AIM3 family.

Its subcellular location is the membrane raft. This is Altered inheritance of mitochondria protein 3-1 (AIM3-1) from Candida glabrata (strain ATCC 2001 / BCRC 20586 / JCM 3761 / NBRC 0622 / NRRL Y-65 / CBS 138) (Yeast).